A 630-amino-acid chain; its full sequence is Molybdenum cofactor biosynthesis protein 1 (630 aa).

One can recognise a Radical SAM core domain in the interval 61 to 298 (RFNRHHTYLR…SKTYHVPGFK (238 aa)). A GTP-binding site is contributed by Arg-70. [4Fe-4S] cluster is bound by residues Cys-77 and Cys-81. Tyr-83 serves as a coordination point for S-adenosyl-L-methionine. Cys-84 is a [4Fe-4S] cluster binding site. Position 120 (Arg-120) interacts with GTP. S-adenosyl-L-methionine is bound at residue Gly-124. Thr-151 provides a ligand contact to GTP. Ser-175 contributes to the S-adenosyl-L-methionine binding site. Lys-212 provides a ligand contact to GTP. Met-246 contacts S-adenosyl-L-methionine. Residues Cys-312 and Cys-315 each contribute to the [4Fe-4S] cluster site. 317-319 (RLR) contacts GTP. Cys-329 contacts [4Fe-4S] cluster. The interval 402-629 (KEVKNYLLKL…GGKSSSPQIT (228 aa)) is molybdenum cofactor biosynthesis protein C. The For molybdenum cofactor biosynthesis protein C activity role is filled by Asp-599.

The protein in the C-terminal section; belongs to the MoaC family. It in the N-terminal section; belongs to the radical SAM superfamily. MoaA family. In terms of assembly, isoform mocs1a and isoform mocs1b probably form a heterooligomer. [4Fe-4S] cluster is required as a cofactor.

It catalyses the reaction GTP + AH2 + S-adenosyl-L-methionine = (8S)-3',8-cyclo-7,8-dihydroguanosine 5'-triphosphate + 5'-deoxyadenosine + L-methionine + A + H(+). The catalysed reaction is (8S)-3',8-cyclo-7,8-dihydroguanosine 5'-triphosphate = cyclic pyranopterin phosphate + diphosphate. The protein operates within cofactor biosynthesis; molybdopterin biosynthesis. Its function is as follows. Isoform mocs1a and isoform mocs1b probably form a complex that catalyzes the conversion of 5'-GTP to cyclic pyranopterin monophosphate (cPMP). mocs1a catalyzes the cyclization of GTP to (8S)-3',8-cyclo-7,8-dihydroguanosine 5'-triphosphate and mocs1b catalyzes the subsequent conversion of (8S)-3',8-cyclo-7,8-dihydroguanosine 5'-triphosphate to cPMP. The protein is Molybdenum cofactor biosynthesis protein 1 (mocs1) of Dictyostelium discoideum (Social amoeba).